Here is a 948-residue protein sequence, read N- to C-terminus: RNA polymerase-associated protein RapA (948 aa).

The Helicase ATP-binding domain maps to 164–332 (EVADRSAPRV…FARLRLLDPN (169 aa)). 177–184 (DEVGLGKT) is an ATP binding site. The DEAH box motif lies at 278 to 281 (DEAH). A Helicase C-terminal domain is found at 473–627 (RVDWLIDTLK…TCPTGNALQH (155 aa)).

It belongs to the SNF2/RAD54 helicase family. RapA subfamily. As to quaternary structure, interacts with the RNAP. Has a higher affinity for the core RNAP than for the holoenzyme. Its ATPase activity is stimulated by binding to RNAP.

Its function is as follows. Transcription regulator that activates transcription by stimulating RNA polymerase (RNAP) recycling in case of stress conditions such as supercoiled DNA or high salt concentrations. Probably acts by releasing the RNAP, when it is trapped or immobilized on tightly supercoiled DNA. Does not activate transcription on linear DNA. Probably not involved in DNA repair. The polypeptide is RNA polymerase-associated protein RapA (Pseudomonas putida (strain ATCC 47054 / DSM 6125 / CFBP 8728 / NCIMB 11950 / KT2440)).